A 520-amino-acid chain; its full sequence is MNTTISNQTPHIRIFDTTLRDGEQSPGCSMTPQQKLVMARALDELGVDIIETGFPASSHSDREAVAMMGRELRRPTLAVLSRCLQADIETSAKALETAANPRLHVFLSTSPLHREHKLRMSREQVLESVHRHVTLARGYIDDVEFSAEDATRTEEDFLAEVTRVAVAAGATTINLPDTVGFTTPEEIRGMFSRLIASVEGADKVIFSAHCHNDLGLAVANSLAAIEGGARQVECTINGIGERAGNCALEEITMALKVRGAFYNIDSAINTPRIVSTSQLLQRLVGMPVQRNKAVVGGNAFAHESGIHQHGMLRHRGTYEIMRPEDVGWESSQMVLGRHSGRAAVERRLRALGYLLEEEEVKLMFEQFKALCEKQRLVTDADLQALMQDATVQEGYRLASMTISDVGSRANALVELSDPEGNRVAETAQGNGPVDALFGALASATGVKLELDSYQVHSVGIGADARGEASLSVRHDGVEYEGTGTSKDIIEASALAWLDVANRLLRQRERGVIAGKTAAVA.

A Pyruvate carboxyltransferase domain is found at 12–274; it reads IRIFDTTLRD…DSAINTPRIV (263 aa). Aspartate 21, histidine 209, histidine 211, and asparagine 245 together coordinate Mn(2+). Residues 396–520 form a regulatory domain region; sequence RLASMTISDV…VIAGKTAAVA (125 aa).

This sequence belongs to the alpha-IPM synthase/homocitrate synthase family. LeuA type 1 subfamily. Homodimer. Mn(2+) serves as cofactor.

It is found in the cytoplasm. The enzyme catalyses 3-methyl-2-oxobutanoate + acetyl-CoA + H2O = (2S)-2-isopropylmalate + CoA + H(+). Its pathway is amino-acid biosynthesis; L-leucine biosynthesis; L-leucine from 3-methyl-2-oxobutanoate: step 1/4. In terms of biological role, catalyzes the condensation of the acetyl group of acetyl-CoA with 3-methyl-2-oxobutanoate (2-ketoisovalerate) to form 3-carboxy-3-hydroxy-4-methylpentanoate (2-isopropylmalate). The protein is 2-isopropylmalate synthase of Xanthomonas oryzae pv. oryzae (strain MAFF 311018).